Reading from the N-terminus, the 652-residue chain is DNA mismatch repair protein MutL (652 aa).

Belongs to the DNA mismatch repair MutL/HexB family.

Functionally, this protein is involved in the repair of mismatches in DNA. It is required for dam-dependent methyl-directed DNA mismatch repair. May act as a 'molecular matchmaker', a protein that promotes the formation of a stable complex between two or more DNA-binding proteins in an ATP-dependent manner without itself being part of a final effector complex. This Aliivibrio salmonicida (strain LFI1238) (Vibrio salmonicida (strain LFI1238)) protein is DNA mismatch repair protein MutL.